A 267-amino-acid chain; its full sequence is Regulatory protein VirG (267 aa).

In terms of domain architecture, Response regulatory spans 29-143 (HVLLVDDDVA…EFLARIRVAL (115 aa)). At aspartate 78 the chain carries 4-aspartylphosphate. The ompR/PhoB-type DNA-binding region spans 155–255 (RRSFCFTDWT…ARGAGYFFDA (101 aa)).

Post-translationally, phosphorylated by wide host range (WHR) VirA protein.

The protein resides in the cytoplasm. In terms of biological role, virG is required for the positive regulation of at least two vir loci encoded by the Ti plasmid of A.tumefaciens. The protein is Regulatory protein VirG (virG) of Agrobacterium tumefaciens (strain 15955).